The sequence spans 320 residues: Pantothenate kinase (320 aa).

96–103 contributes to the ATP binding site; the sequence is GSVAVGKS.

This sequence belongs to the prokaryotic pantothenate kinase family.

The protein resides in the cytoplasm. It carries out the reaction (R)-pantothenate + ATP = (R)-4'-phosphopantothenate + ADP + H(+). It functions in the pathway cofactor biosynthesis; coenzyme A biosynthesis; CoA from (R)-pantothenate: step 1/5. The chain is Pantothenate kinase from Brevibacillus brevis (strain 47 / JCM 6285 / NBRC 100599).